Here is a 120-residue protein sequence, read N- to C-terminus: Chaperonin GroEL (120 aa).

23–27 (DGTTT) is a binding site for ATP.

Belongs to the chaperonin (HSP60) family. In terms of assembly, forms a cylinder of 14 subunits composed of two heptameric rings stacked back-to-back. Interacts with the co-chaperonin GroES.

The protein resides in the cytoplasm. It carries out the reaction ATP + H2O + a folded polypeptide = ADP + phosphate + an unfolded polypeptide.. Together with its co-chaperonin GroES, plays an essential role in assisting protein folding. The GroEL-GroES system forms a nano-cage that allows encapsulation of the non-native substrate proteins and provides a physical environment optimized to promote and accelerate protein folding. In Mycobacterium gordonae, this protein is Chaperonin GroEL.